The chain runs to 356 residues: MAPVLKKYKAAAVNAEPGWFNLEESVRRTIHWIDEAGKAGCKFIAFPELWIPGYPYWMWKVNYQESLPLLKKYRENSLPSDSDEMRRIRNAARANKIYVSLGYSEVDLASLYTTQVMISPSGDILNHRRKIRATHVERLVFGDGTGDTTESVIQTDIGRVGHLNCWENMNPFMKAYAASLGEQVHVAAWPLYPGKETLKYPDPFTNVAEANADLVTPAYAIETGTYTLAPWQTITAEGIKLNTPPGKDLEDPHIYNGHGRIFGPDGQNLVPHPDKDFEGLLFVDIDLDECHLSKSLADFGGHYMRPDLIRLLVDTNRKDLVVREDRVNGGVEYTRTVDRVGLSTPLDIANTVDSEN.

In terms of domain architecture, CN hydrolase spans tyrosine 8–leucine 287. Catalysis depends on glutamate 48, which acts as the Proton acceptor. Lysine 130 is an active-site residue. The Nucleophile role is filled by cysteine 165.

It belongs to the carbon-nitrogen hydrolase superfamily. Nitrilase family. Oligomer of dimers, forming left-handed helical fibers.

It catalyses the reaction formamide = hydrogen cyanide + H2O. In terms of biological role, catalyzes the hydration of cyanide to formamide. Degradation of cyanide may be important for plant pathogenic fungi in infection of cyanogenic plants. Can also transform some nitriles like 2-cyanopyridine and fumaronitrile. The chain is Cyanide hydratase from Aspergillus niger.